The primary structure comprises 354 residues: Uroporphyrinogen decarboxylase (354 aa).

Substrate-binding positions include 27–31, D77, Y154, S209, and H327; that span reads RQAGR.

The protein belongs to the uroporphyrinogen decarboxylase family. Homodimer.

It localises to the cytoplasm. The catalysed reaction is uroporphyrinogen III + 4 H(+) = coproporphyrinogen III + 4 CO2. The protein operates within porphyrin-containing compound metabolism; protoporphyrin-IX biosynthesis; coproporphyrinogen-III from 5-aminolevulinate: step 4/4. Its function is as follows. Catalyzes the decarboxylation of four acetate groups of uroporphyrinogen-III to yield coproporphyrinogen-III. This is Uroporphyrinogen decarboxylase from Shewanella frigidimarina (strain NCIMB 400).